Reading from the N-terminus, the 87-residue chain is MAHKKAGGSSRNGRDSKAKRLGIKRFGGELVSAGSILVRQRGTPFHAGENVGMGKDHTLFATATGKVSFSIRGAEKRRFVSVEEIQS.

This sequence belongs to the bacterial ribosomal protein bL27 family.

This Dichelobacter nodosus (strain VCS1703A) protein is Large ribosomal subunit protein bL27.